Consider the following 137-residue polypeptide: Large ribosomal subunit protein uL16 (137 aa).

This sequence belongs to the universal ribosomal protein uL16 family. In terms of assembly, part of the 50S ribosomal subunit.

Its function is as follows. Binds 23S rRNA and is also seen to make contacts with the A and possibly P site tRNAs. The protein is Large ribosomal subunit protein uL16 of Rhodopseudomonas palustris (strain BisA53).